The primary structure comprises 268 residues: MSRFETQFATLNAKNEGAFVPFVTLCDPTFDRSFEIICTLVDNGADALELGFPFSDPLLDGPVIQAANNRALTAGHSSEDSFKLLEKVRSKYPEIPISLLLCANLIFAKGLDAFYQRCAEVGVDAVLVADIPLLAKEDYVQAAKKHGIQPVFICPPNADEKTIQGVAKNSEGYTYLVSRAGVTSAENQAHAANLDTLVEQLKAHNAPPILQGFGIAQPAQVKEALALGAAGAISGSATVKIIERNLDNHEQCLAELAEFVQTMKAATK.

Residues E49 and D60 each act as proton acceptor in the active site.

The protein belongs to the TrpA family. Tetramer of two alpha and two beta chains.

The catalysed reaction is (1S,2R)-1-C-(indol-3-yl)glycerol 3-phosphate + L-serine = D-glyceraldehyde 3-phosphate + L-tryptophan + H2O. It participates in amino-acid biosynthesis; L-tryptophan biosynthesis; L-tryptophan from chorismate: step 5/5. Functionally, the alpha subunit is responsible for the aldol cleavage of indoleglycerol phosphate to indole and glyceraldehyde 3-phosphate. The polypeptide is Tryptophan synthase alpha chain (Haemophilus influenzae (strain PittEE)).